A 123-amino-acid chain; its full sequence is Small ribosomal subunit protein uS13 (123 aa).

The disordered stretch occupies residues 97-123 (PVRGQKTKTNARTRKGPKKTVGRKKKK). A compositionally biased stretch (basic residues) spans 101–123 (QKTKTNARTRKGPKKTVGRKKKK).

The protein belongs to the universal ribosomal protein uS13 family. In terms of assembly, part of the 30S ribosomal subunit. Forms a loose heterodimer with protein S19. Forms two bridges to the 50S subunit in the 70S ribosome.

Located at the top of the head of the 30S subunit, it contacts several helices of the 16S rRNA. In the 70S ribosome it contacts the 23S rRNA (bridge B1a) and protein L5 of the 50S subunit (bridge B1b), connecting the 2 subunits; these bridges are implicated in subunit movement. Contacts the tRNAs in the A and P-sites. This is Small ribosomal subunit protein uS13 from Alkaliphilus oremlandii (strain OhILAs) (Clostridium oremlandii (strain OhILAs)).